We begin with the raw amino-acid sequence, 501 residues long: Cytochrome P450 81F4 (501 aa).

Residue Lys245 forms a Glycyl lysine isopeptide (Lys-Gly) (interchain with G-Cter in ubiquitin) linkage. The helical transmembrane segment at 285 to 305 (IIIKGLMLGIMVASSETSALT) threads the bilayer. Cys435 contacts heme.

Belongs to the cytochrome P450 family. Heme serves as cofactor.

It is found in the membrane. It participates in secondary metabolite biosynthesis. In terms of biological role, involved in indole glucosinolate biosynthesis. Catalyzes hydroxylation reactions of the glucosinolate indole ring. Converts indol-3-yl-methylglucosinolate (I3M) to 1-hydroxy-indol-3-yl-methylglucosinolate (1OH-I3M) intermediate. This hydroxy intermediates is converted to 1-methoxy-indol-3-yl-methylglucosinolate (1MO-I3M) by indole glucosinolate methyltransferase 1 and 2 (IGMT1 and IGMT2). This Arabidopsis thaliana (Mouse-ear cress) protein is Cytochrome P450 81F4.